The following is a 213-amino-acid chain: Kynurenine formamidase (213 aa).

Residue tryptophan 20 participates in substrate binding. Zn(2+) contacts are provided by histidine 50, histidine 54, and aspartate 56. Histidine 60 functions as the Proton donor/acceptor in the catalytic mechanism. Zn(2+) contacts are provided by histidine 161 and glutamate 173.

The protein belongs to the Cyclase 1 superfamily. KynB family. As to quaternary structure, homodimer. The cofactor is Zn(2+).

It catalyses the reaction N-formyl-L-kynurenine + H2O = L-kynurenine + formate + H(+). The protein operates within amino-acid degradation; L-tryptophan degradation via kynurenine pathway; L-kynurenine from L-tryptophan: step 2/2. In terms of biological role, catalyzes the hydrolysis of N-formyl-L-kynurenine to L-kynurenine, the second step in the kynurenine pathway of tryptophan degradation. This is Kynurenine formamidase from Pseudomonas aeruginosa (strain ATCC 15692 / DSM 22644 / CIP 104116 / JCM 14847 / LMG 12228 / 1C / PRS 101 / PAO1).